We begin with the raw amino-acid sequence, 652 residues long: Trypanothione synthetase (652 aa).

Residues Ser34–Ile174 enclose the Peptidase C51 domain. ATP is bound at residue Arg328–Asp330. 3 residues coordinate Mg(2+): Asp330, Glu344, and Asn346. ATP is bound by residues Lys513, Lys548, Gly555, Gln583, and Ile618–Thr620.

It in the C-terminal section; belongs to the glutathionylspermidine synthase preATP-grasp family. It depends on Mg(2+) as a cofactor. Post-translationally, the N-terminus is blocked.

The catalysed reaction is spermidine + glutathione + ATP = glutathionylspermidine + ADP + phosphate + H(+). It catalyses the reaction glutathionylspermidine + glutathione + ATP = trypanothione + ADP + phosphate + H(+). Conjugates glutathione (gamma-Glu-Cys-Gly) and glutathionylspermidine to form trypanothione (N(1),N(8)-bis(glutathionyl)spermidine), which is involved in maintaining intracellular thiol redox and in defense against oxidants. The polypeptide is Trypanothione synthetase (TRS) (Crithidia fasciculata).